The primary structure comprises 932 residues: Leucine--tRNA ligase (932 aa).

The 'HIGH' region motif lies at 38–48 (PYLNGNLHAGH). Positions 630 to 634 (KMSKS) match the 'KMSKS' region motif. Lys-633 provides a ligand contact to ATP.

Belongs to the class-I aminoacyl-tRNA synthetase family.

The protein localises to the cytoplasm. It carries out the reaction tRNA(Leu) + L-leucine + ATP = L-leucyl-tRNA(Leu) + AMP + diphosphate. This Archaeoglobus fulgidus (strain ATCC 49558 / DSM 4304 / JCM 9628 / NBRC 100126 / VC-16) protein is Leucine--tRNA ligase.